The primary structure comprises 68 residues: Small ribosomal subunit protein bS21 (68 aa).

Belongs to the bacterial ribosomal protein bS21 family.

This chain is Small ribosomal subunit protein bS21, found in Dinoroseobacter shibae (strain DSM 16493 / NCIMB 14021 / DFL 12).